Consider the following 169-residue polypeptide: Ribosome maturation factor RimM (169 aa).

A PRC barrel domain is found at 92–167 (PKDTYFICDI…YMKIKVVEGL (76 aa)).

It belongs to the RimM family. Binds ribosomal protein uS19.

Its subcellular location is the cytoplasm. Its function is as follows. An accessory protein needed during the final step in the assembly of 30S ribosomal subunit, possibly for assembly of the head region. Essential for efficient processing of 16S rRNA. May be needed both before and after RbfA during the maturation of 16S rRNA. It has affinity for free ribosomal 30S subunits but not for 70S ribosomes. This Caldicellulosiruptor bescii (strain ATCC BAA-1888 / DSM 6725 / KCTC 15123 / Z-1320) (Anaerocellum thermophilum) protein is Ribosome maturation factor RimM.